We begin with the raw amino-acid sequence, 465 residues long: UDP-N-acetylmuramoylalanine--D-glutamate ligase (465 aa).

116-122 provides a ligand contact to ATP; the sequence is GTNGKTT.

Belongs to the MurCDEF family.

Its subcellular location is the cytoplasm. The enzyme catalyses UDP-N-acetyl-alpha-D-muramoyl-L-alanine + D-glutamate + ATP = UDP-N-acetyl-alpha-D-muramoyl-L-alanyl-D-glutamate + ADP + phosphate + H(+). It functions in the pathway cell wall biogenesis; peptidoglycan biosynthesis. Its function is as follows. Cell wall formation. Catalyzes the addition of glutamate to the nucleotide precursor UDP-N-acetylmuramoyl-L-alanine (UMA). The protein is UDP-N-acetylmuramoylalanine--D-glutamate ligase of Thermobifida fusca (strain YX).